Here is a 227-residue protein sequence, read N- to C-terminus: Phosphoribosylformylglycinamidine synthase subunit PurQ (227 aa).

One can recognise a Glutamine amidotransferase type-1 domain in the interval 3 to 225 (FAVIVFPGSN…LKYWRETYVV (223 aa)). The Nucleophile role is filled by cysteine 86. Residues histidine 194 and glutamate 196 contribute to the active site.

Part of the FGAM synthase complex composed of 1 PurL, 1 PurQ and 2 PurS subunits.

It is found in the cytoplasm. The catalysed reaction is N(2)-formyl-N(1)-(5-phospho-beta-D-ribosyl)glycinamide + L-glutamine + ATP + H2O = 2-formamido-N(1)-(5-O-phospho-beta-D-ribosyl)acetamidine + L-glutamate + ADP + phosphate + H(+). The enzyme catalyses L-glutamine + H2O = L-glutamate + NH4(+). It participates in purine metabolism; IMP biosynthesis via de novo pathway; 5-amino-1-(5-phospho-D-ribosyl)imidazole from N(2)-formyl-N(1)-(5-phospho-D-ribosyl)glycinamide: step 1/2. In terms of biological role, part of the phosphoribosylformylglycinamidine synthase complex involved in the purines biosynthetic pathway. Catalyzes the ATP-dependent conversion of formylglycinamide ribonucleotide (FGAR) and glutamine to yield formylglycinamidine ribonucleotide (FGAM) and glutamate. The FGAM synthase complex is composed of three subunits. PurQ produces an ammonia molecule by converting glutamine to glutamate. PurL transfers the ammonia molecule to FGAR to form FGAM in an ATP-dependent manner. PurS interacts with PurQ and PurL and is thought to assist in the transfer of the ammonia molecule from PurQ to PurL. The protein is Phosphoribosylformylglycinamidine synthase subunit PurQ of Bacillus cytotoxicus (strain DSM 22905 / CIP 110041 / 391-98 / NVH 391-98).